The following is a 222-amino-acid chain: Urease accessory protein UreF (222 aa).

The protein belongs to the UreF family. As to quaternary structure, ureD, UreF and UreG form a complex that acts as a GTP-hydrolysis-dependent molecular chaperone, activating the urease apoprotein by helping to assemble the nickel containing metallocenter of UreC. The UreE protein probably delivers the nickel.

Its subcellular location is the cytoplasm. Functionally, required for maturation of urease via the functional incorporation of the urease nickel metallocenter. The chain is Urease accessory protein UreF from Hahella chejuensis (strain KCTC 2396).